We begin with the raw amino-acid sequence, 447 residues long: Phosphoglucosamine mutase (447 aa).

S101 (phosphoserine intermediate) is an active-site residue. Residues S101, D242, D244, and D246 each coordinate Mg(2+). Residue S101 is modified to Phosphoserine.

It belongs to the phosphohexose mutase family. Mg(2+) is required as a cofactor. Activated by phosphorylation.

It catalyses the reaction alpha-D-glucosamine 1-phosphate = D-glucosamine 6-phosphate. Catalyzes the conversion of glucosamine-6-phosphate to glucosamine-1-phosphate. In Azorhizobium caulinodans (strain ATCC 43989 / DSM 5975 / JCM 20966 / LMG 6465 / NBRC 14845 / NCIMB 13405 / ORS 571), this protein is Phosphoglucosamine mutase.